Here is a 415-residue protein sequence, read N- to C-terminus: Imidazolonepropionase (415 aa).

Positions 83 and 85 each coordinate Fe(3+). Zn(2+) contacts are provided by H83 and H85. 4-imidazolone-5-propanoate contacts are provided by R92, Y155, and H188. An N-formimidoyl-L-glutamate-binding site is contributed by Y155. Residue H250 participates in Fe(3+) binding. H250 serves as a coordination point for Zn(2+). Q253 provides a ligand contact to 4-imidazolone-5-propanoate. Residue D324 coordinates Fe(3+). D324 contacts Zn(2+). Residues N326 and G328 each contribute to the N-formimidoyl-L-glutamate site. S329 contacts 4-imidazolone-5-propanoate.

The protein belongs to the metallo-dependent hydrolases superfamily. HutI family. Zn(2+) serves as cofactor. It depends on Fe(3+) as a cofactor.

The protein localises to the cytoplasm. The enzyme catalyses 4-imidazolone-5-propanoate + H2O = N-formimidoyl-L-glutamate. Its pathway is amino-acid degradation; L-histidine degradation into L-glutamate; N-formimidoyl-L-glutamate from L-histidine: step 3/3. In terms of biological role, catalyzes the hydrolytic cleavage of the carbon-nitrogen bond in imidazolone-5-propanoate to yield N-formimidoyl-L-glutamate. It is the third step in the universal histidine degradation pathway. The protein is Imidazolonepropionase of Rubrobacter xylanophilus (strain DSM 9941 / JCM 11954 / NBRC 16129 / PRD-1).